The primary structure comprises 428 residues: MVEASLRVSGSTNPISGRIVANGAKNSALPIMAACLLLNGSVVLAGMPDLRDVTVMSELITSLGGRISFLRNTKEKANHKVEINCDNLHNWAIPHEITSQMRASCLTLGPILTRMGRAEVALPGGCSIGSRPLDMHIWALQKLGAKVEVCGNYVKCSSSGKLVGCHIDFQSVSVGATENALMAAVMAHGTTTISNAAIEPEVADLAHFLVKAGAQISGIGTRTLQICGVQQLSGPSHTIIRDRMEAGTYALAAISTGGSVHIAGVTSEILGCLAHELEGMGGKVTDVPDGLVVSRHSPQINPVVLHTAPYPGFPSDMQAQFAATACLARGTSQIHEHVFDRRFSYARELAKMGADIHVQGNTASIRGVDKLHGASVQAPDLRASAALLIAGLSAQGVTTISNAQTLYRGYEAMEEKLRACGAEVELVR.

Residue 25 to 26 (KN) participates in phosphoenolpyruvate binding. Arg-102 serves as a coordination point for UDP-N-acetyl-alpha-D-glucosamine. The Proton donor role is filled by Cys-126. Position 126 is a 2-(S-cysteinyl)pyruvic acid O-phosphothioketal (Cys-126). UDP-N-acetyl-alpha-D-glucosamine is bound by residues Asp-316 and Val-338.

The protein belongs to the EPSP synthase family. MurA subfamily.

The protein localises to the cytoplasm. The catalysed reaction is phosphoenolpyruvate + UDP-N-acetyl-alpha-D-glucosamine = UDP-N-acetyl-3-O-(1-carboxyvinyl)-alpha-D-glucosamine + phosphate. Its pathway is cell wall biogenesis; peptidoglycan biosynthesis. Functionally, cell wall formation. Adds enolpyruvyl to UDP-N-acetylglucosamine. This is UDP-N-acetylglucosamine 1-carboxyvinyltransferase from Anaplasma marginale (strain St. Maries).